The following is an 874-amino-acid chain: Tyrosine-protein kinase receptor TYRO3 (874 aa).

The N-terminal stretch at 1–20 (MEVSLCILLFLLHFNEGIHG) is a signal peptide. Ig-like C2-type domains lie at 21–106 (VRFT…IISS) and 117–198 (PHFG…GTVH). At 21–411 (VRFTQKPFHQ…QAQTQRGHMW (391 aa)) the chain is on the extracellular side. An intrachain disulfide couples cysteine 42 to cysteine 95. Asparagine 135, asparagine 174, asparagine 217, asparagine 270, asparagine 305, and asparagine 373 each carry an N-linked (GlcNAc...) asparagine glycan. An intrachain disulfide couples cysteine 138 to cysteine 181. 2 consecutive Fibronectin type-III domains span residues 202-297 (RPDS…TPQA) and 299-403 (PSAA…AMQA). A helical transmembrane segment spans residues 412-432 (VGLLFGLLVATMVGLLLIVLI). Residues 433–874 (RNRGKETQFG…EEEEDVIINV (442 aa)) lie on the Cytoplasmic side of the membrane. The region spanning 497–768 (LTLGRMLGKG…QHLIDQLELL (272 aa)) is the Protein kinase domain. ATP-binding positions include 503–511 (LGKGEFGSV) and lysine 529. Aspartate 634 (proton acceptor) is an active-site residue. Residue tyrosine 665 is modified to Phosphotyrosine; by autocatalysis.

This sequence belongs to the protein kinase superfamily. Tyr protein kinase family. AXL/UFO subfamily.

It is found in the cell membrane. It carries out the reaction L-tyrosyl-[protein] + ATP = O-phospho-L-tyrosyl-[protein] + ADP + H(+). Functionally, may be involved in cell adhesion processes, particularly in the central nervous system. The chain is Tyrosine-protein kinase receptor TYRO3 (tyro3) from Danio rerio (Zebrafish).